A 183-amino-acid chain; its full sequence is ATP synthase subunit delta (183 aa).

It belongs to the ATPase delta chain family. As to quaternary structure, F-type ATPases have 2 components, F(1) - the catalytic core - and F(0) - the membrane proton channel. F(1) has five subunits: alpha(3), beta(3), gamma(1), delta(1), epsilon(1). F(0) has three main subunits: a(1), b(2) and c(10-14). The alpha and beta chains form an alternating ring which encloses part of the gamma chain. F(1) is attached to F(0) by a central stalk formed by the gamma and epsilon chains, while a peripheral stalk is formed by the delta and b chains.

The protein resides in the cell inner membrane. Its function is as follows. F(1)F(0) ATP synthase produces ATP from ADP in the presence of a proton or sodium gradient. F-type ATPases consist of two structural domains, F(1) containing the extramembraneous catalytic core and F(0) containing the membrane proton channel, linked together by a central stalk and a peripheral stalk. During catalysis, ATP synthesis in the catalytic domain of F(1) is coupled via a rotary mechanism of the central stalk subunits to proton translocation. This protein is part of the stalk that links CF(0) to CF(1). It either transmits conformational changes from CF(0) to CF(1) or is implicated in proton conduction. The chain is ATP synthase subunit delta from Desulfosudis oleivorans (strain DSM 6200 / JCM 39069 / Hxd3) (Desulfococcus oleovorans).